The following is a 362-amino-acid chain: [LysW]-lysine hydrolase (362 aa).

His69 is a binding site for Zn(2+). Asp71 is a catalytic residue. Asp94 is a Zn(2+) binding site. Glu127 functions as the Proton acceptor in the catalytic mechanism. The Zn(2+) site is built by Glu128, Glu151, and His334.

It belongs to the peptidase M20A family. LysK subfamily. The cofactor is Zn(2+). Co(2+) serves as cofactor.

Its subcellular location is the cytoplasm. The catalysed reaction is [amino-group carrier protein]-C-terminal-gamma-(L-lysyl)-L-glutamate + H2O = [amino-group carrier protein]-C-terminal-L-glutamate + L-lysine. It functions in the pathway amino-acid biosynthesis; L-lysine biosynthesis via AAA pathway; L-lysine from L-alpha-aminoadipate (Thermus route): step 5/5. Its function is as follows. Catalyzes the release of L-lysine from [LysW]-gamma-L-lysine. The polypeptide is [LysW]-lysine hydrolase (Deinococcus radiodurans (strain ATCC 13939 / DSM 20539 / JCM 16871 / CCUG 27074 / LMG 4051 / NBRC 15346 / NCIMB 9279 / VKM B-1422 / R1)).